The following is a 261-amino-acid chain: Ribonuclease 3 (261 aa).

Residues Y20–G144 enclose the RNase III domain. Residue E62 coordinates Mg(2+). D66 is a catalytic residue. 2 residues coordinate Mg(2+): N130 and E133. E133 is a catalytic residue. Positions N172 to T241 constitute a DRBM domain.

Belongs to the ribonuclease III family. Homodimer. Mg(2+) serves as cofactor.

It is found in the cytoplasm. The catalysed reaction is Endonucleolytic cleavage to 5'-phosphomonoester.. Digests double-stranded RNA. Involved in the processing of primary rRNA transcript to yield the immediate precursors to the large and small rRNAs (23S and 16S). Processes some mRNAs, and tRNAs when they are encoded in the rRNA operon. Processes pre-crRNA and tracrRNA of type II CRISPR loci if present in the organism. This chain is Ribonuclease 3, found in Azobacteroides pseudotrichonymphae genomovar. CFP2.